The primary structure comprises 45 residues: Large ribosomal subunit protein bL34 (45 aa).

The tract at residues 1–45 is disordered; it reads MTKRTFGGTSRKRKRVSGFRVRMRSHTGRRVIKSRRQKGRERIAV. Basic residues predominate over residues 10 to 39; it reads SRKRKRVSGFRVRMRSHTGRRVIKSRRQKG.

Belongs to the bacterial ribosomal protein bL34 family.

In Prochlorococcus marinus (strain MIT 9301), this protein is Large ribosomal subunit protein bL34.